Consider the following 1228-residue polypeptide: MARGRIRSKLRLSLLYTFGCLRPATLEGQDSQPIQGPGFSRTVFCNQPHMHKKKPLRYRSNYVSTTRYNLITFFPKSLYEQFHRAANLYFLVAAILSVFPLSPFNKWSMIAPLVFVVGLSMLKEALEDWRRFMQDVKINARKTCVHKSDGVFRQRKWKKVSVGDIVKVEKDEFFPADLLLLSSSYEDGICYVETMNLDGETNLKVKRSLEVSLPLDDDESFKNFMATIRCEDPNPNLYTFVGNLEFERQTFPLDPSQILLRDSKLRNTTYVYGVVVFTGFDTKVMQNSTKSPSKRSRIERTMDYIIYTLLVLLILISCISSSGFAWETEFHMPKMWYLRPGEPIDFTNPINPIYAGVVHLITALLLYGYLIPISLYVSIEVVKVWQASFINQDLHMYDDESGVPANARTSNLNEELGQVHTILSDKTGTLTCNQMDFLKCSIAGTSYGVRSSEVEVAAAKQMAVDLEEHGEISSTPQSQTKVYGTWDSSRTQEIEVEGDNNYNTPRAPIKGFGFEDNRLMNGNWLRESQPNDILQFFRILAICHTAIPELNEETGKYTYEAESPDEASFLAAAREFGFEFFKRTQSSVFIRERFSGSGQIIEREYKVLNLLEFTSKRKRMTVIVRDEEGQILLLCKGADSIIFERLAKNGKTYLGPTTRHLTEYGEAGLRTLALAYRKLDEDEYAAWNSEFLKAKTSIGSDRDELLETGADMIEKELILIGATAVEDKLQKGVPQCIDKLAQAGLKLWVLTGDKMETAINIGFACSLLRQGMRQICITSMNSEGGSQDSKRVVKENILNQLTKAVQMVKLEKDPHAAFALIIDGKTLTYALEDDMKYQFLALAVDCASVICCRVSPKQKALVVRLVKEGTGKTTLAIGDGANDVGMIQEADIGVGISGVEGMQAVMASDFSIAQFRFLERLLVVHGHWCYKRIAQMICYFFYKNIAFGLTLFYFEAFTGFSGQSVYNDYYLLLFNVVLTSLPVIALGVFEQDVSSEICLQFPALYQQGTKNLFFDWSRILGWMCNGVYASLVIFFLNIGIIYSQAFRDNGQTADMDAVGTTMFTCIIWAANVQIALTMSHFTWIQHVLIWGSIGMWYLFVAIYSMMPPSYSGNIYRILDEILAPAPIYWMATLLVTVAAVLPYVAHIAFQRFLNPLDHHIIQEIKYYGRDIEDARLWTRERTKAREKTKIGFTARVDAKIRHLRSKLNKKQSNLSHFSAQDAMSPRSL.

Residues 1–74 lie on the Cytoplasmic side of the membrane; that stretch reads MARGRIRSKL…TTRYNLITFF (74 aa). Residues 75 to 96 form a helical membrane-spanning segment; that stretch reads PKSLYEQFHRAANLYFLVAAIL. Over 97-100 the chain is Extracellular; sequence SVFP. A helical membrane pass occupies residues 101 to 123; it reads LSPFNKWSMIAPLVFVVGLSMLK. The Cytoplasmic portion of the chain corresponds to 124–305; sequence EALEDWRRFM…SRIERTMDYI (182 aa). Residues 306 to 327 traverse the membrane as a helical segment; that stretch reads IYTLLVLLILISCISSSGFAWE. Topologically, residues 328–359 are extracellular; the sequence is TEFHMPKMWYLRPGEPIDFTNPINPIYAGVVH. A helical transmembrane segment spans residues 360–377; the sequence is LITALLLYGYLIPISLYV. Residues 378 to 934 are Cytoplasmic-facing; the sequence is SIEVVKVWQA…HGHWCYKRIA (557 aa). The 4-aspartylphosphate intermediate role is filled by aspartate 425. Lysine 616 is covalently cross-linked (Glycyl lysine isopeptide (Lys-Gly) (interchain with G-Cter in ubiquitin)). Mg(2+) is bound by residues aspartate 879 and aspartate 883. A helical membrane pass occupies residues 935-954; the sequence is QMICYFFYKNIAFGLTLFYF. The Extracellular portion of the chain corresponds to 955–968; sequence EAFTGFSGQSVYND. The chain crosses the membrane as a helical span at residues 969–988; the sequence is YYLLLFNVVLTSLPVIALGV. Residues 989 to 1018 lie on the Cytoplasmic side of the membrane; the sequence is FEQDVSSEICLQFPALYQQGTKNLFFDWSR. Residues 1019–1041 traverse the membrane as a helical segment; it reads ILGWMCNGVYASLVIFFLNIGII. Topologically, residues 1042 to 1054 are extracellular; that stretch reads YSQAFRDNGQTAD. A helical transmembrane segment spans residues 1055 to 1077; sequence MDAVGTTMFTCIIWAANVQIALT. The Cytoplasmic segment spans residues 1078-1083; sequence MSHFTW. A helical transmembrane segment spans residues 1084-1104; the sequence is IQHVLIWGSIGMWYLFVAIYS. The Extracellular portion of the chain corresponds to 1105–1117; that stretch reads MMPPSYSGNIYRI. A helical transmembrane segment spans residues 1118–1146; sequence LDEILAPAPIYWMATLLVTVAAVLPYVAH. Over 1147-1228 the chain is Cytoplasmic; that stretch reads IAFQRFLNPL…AQDAMSPRSL (82 aa).

Belongs to the cation transport ATPase (P-type) (TC 3.A.3) family. Type IV subfamily.

It localises to the membrane. It catalyses the reaction ATP + H2O + phospholipidSide 1 = ADP + phosphate + phospholipidSide 2.. Functionally, involved in transport of phospholipids. This is Probable phospholipid-transporting ATPase 5 from Arabidopsis thaliana (Mouse-ear cress).